The primary structure comprises 394 residues: Phosphopentomutase (394 aa).

The Mn(2+) site is built by aspartate 10, aspartate 282, histidine 287, aspartate 323, histidine 324, and histidine 335.

It belongs to the phosphopentomutase family. Mn(2+) serves as cofactor.

Its subcellular location is the cytoplasm. The catalysed reaction is 2-deoxy-alpha-D-ribose 1-phosphate = 2-deoxy-D-ribose 5-phosphate. It carries out the reaction alpha-D-ribose 1-phosphate = D-ribose 5-phosphate. Its pathway is carbohydrate degradation; 2-deoxy-D-ribose 1-phosphate degradation; D-glyceraldehyde 3-phosphate and acetaldehyde from 2-deoxy-alpha-D-ribose 1-phosphate: step 1/2. Its function is as follows. Isomerase that catalyzes the conversion of deoxy-ribose 1-phosphate (dRib-1-P) and ribose 1-phosphate (Rib-1-P) to deoxy-ribose 5-phosphate (dRib-5-P) and ribose 5-phosphate (Rib-5-P), respectively. The protein is Phosphopentomutase of Dictyoglomus turgidum (strain DSM 6724 / Z-1310).